A 203-amino-acid chain; its full sequence is High frequency lysogenization protein HflD homolog (203 aa).

The protein belongs to the HflD family.

The protein resides in the cytoplasm. It is found in the cell inner membrane. This Dichelobacter nodosus (strain VCS1703A) protein is High frequency lysogenization protein HflD homolog.